The primary structure comprises 353 residues: Probable butyrate kinase (353 aa).

It belongs to the acetokinase family.

The protein resides in the cytoplasm. The catalysed reaction is butanoate + ATP = butanoyl phosphate + ADP. The chain is Probable butyrate kinase from Bacteroides thetaiotaomicron (strain ATCC 29148 / DSM 2079 / JCM 5827 / CCUG 10774 / NCTC 10582 / VPI-5482 / E50).